Here is a 449-residue protein sequence, read N- to C-terminus: Phosphoglucosamine mutase (449 aa).

S100 (phosphoserine intermediate) is an active-site residue. 4 residues coordinate Mg(2+): S100, D240, D242, and D244. S100 bears the Phosphoserine mark.

This sequence belongs to the phosphohexose mutase family. Mg(2+) serves as cofactor. Activated by phosphorylation.

The enzyme catalyses alpha-D-glucosamine 1-phosphate = D-glucosamine 6-phosphate. Functionally, catalyzes the conversion of glucosamine-6-phosphate to glucosamine-1-phosphate. This is Phosphoglucosamine mutase from Clostridium novyi (strain NT).